Reading from the N-terminus, the 369-residue chain is tRNA 2-selenouridine synthase (369 aa).

The 125-residue stretch at 12-136 (FLEDTPLMDV…LRNFLFETTR (125 aa)) folds into the Rhodanese domain. Cys95 serves as the catalytic S-selanylcysteine intermediate.

Belongs to the SelU family. Monomer.

It catalyses the reaction 5-methylaminomethyl-2-thiouridine(34) in tRNA + selenophosphate + (2E)-geranyl diphosphate + H2O + H(+) = 5-methylaminomethyl-2-selenouridine(34) in tRNA + (2E)-thiogeraniol + phosphate + diphosphate. The enzyme catalyses 5-methylaminomethyl-2-thiouridine(34) in tRNA + (2E)-geranyl diphosphate = 5-methylaminomethyl-S-(2E)-geranyl-thiouridine(34) in tRNA + diphosphate. It carries out the reaction 5-methylaminomethyl-S-(2E)-geranyl-thiouridine(34) in tRNA + selenophosphate + H(+) = 5-methylaminomethyl-2-(Se-phospho)selenouridine(34) in tRNA + (2E)-thiogeraniol. The catalysed reaction is 5-methylaminomethyl-2-(Se-phospho)selenouridine(34) in tRNA + H2O = 5-methylaminomethyl-2-selenouridine(34) in tRNA + phosphate. Its function is as follows. Involved in the post-transcriptional modification of the uridine at the wobble position (U34) of tRNA(Lys), tRNA(Glu) and tRNA(Gln). Catalyzes the conversion of 2-thiouridine (S2U-RNA) to 2-selenouridine (Se2U-RNA). Acts in a two-step process involving geranylation of 2-thiouridine (S2U) to S-geranyl-2-thiouridine (geS2U) and subsequent selenation of the latter derivative to 2-selenouridine (Se2U) in the tRNA chain. This is tRNA 2-selenouridine synthase from Pseudomonas paraeruginosa (strain DSM 24068 / PA7) (Pseudomonas aeruginosa (strain PA7)).